The following is a 313-amino-acid chain: Malate dehydrogenase (313 aa).

NAD(+)-binding positions include 11–16 and D35; that span reads GAGNIG. 2 residues coordinate substrate: R86 and R92. Residues N99 and 122 to 124 contribute to the NAD(+) site; that span reads ISN. N124 and R155 together coordinate substrate. H179 functions as the Proton acceptor in the catalytic mechanism.

This sequence belongs to the LDH/MDH superfamily. MDH type 3 family.

It carries out the reaction (S)-malate + NAD(+) = oxaloacetate + NADH + H(+). Catalyzes the reversible oxidation of malate to oxaloacetate. The chain is Malate dehydrogenase from Sorangium cellulosum (strain So ce56) (Polyangium cellulosum (strain So ce56)).